A 273-amino-acid polypeptide reads, in one-letter code: uncharacterized protein (273 aa).

Residues Thr29–Leu131 enclose the AB hydrolase-1 domain. Active-site residues include Ser102 and His254.

Belongs to the DmpD/TodF/XylF esterase family.

This is an uncharacterized protein from Bacillus subtilis (strain 168).